Reading from the N-terminus, the 195-residue chain is U8 snoRNA-decapping enzyme (195 aa).

A Nudix hydrolase domain is found at 18-173; it reads DWRHACHALL…IGAAREQLLE (156 aa). Residues histidine 24, arginine 50, and phenylalanine 57 each contribute to the substrate site. Mn(2+) is bound by residues glycine 59, glutamate 76, glutamate 80, and histidine 99. Residues 61–82 carry the Nudix box motif; that stretch reads FVDAQDSCLEDGLNRELREELG. Substrate is bound at residue glutamine 170. Glutamate 173 is a binding site for Mn(2+).

Belongs to the Nudix hydrolase family. NUDT16 subfamily. Homodimer. Requires Mg(2+) as cofactor. It depends on Mn(2+) as a cofactor. Co(2+) is required as a cofactor. In terms of tissue distribution, expressed in brain, testis, spleen, lung, heart, liver, kidney and muscle (at protein level).

It localises to the nucleus. The protein resides in the nucleolus. Its subcellular location is the nucleoplasm. The protein localises to the cytoplasm. It catalyses the reaction a 5'-end (N(7)-methyl 5'-triphosphoguanosine)-ribonucleoside in mRNA + H2O = N(7)-methyl-GDP + a 5'-end phospho-ribonucleoside in mRNA + 2 H(+). The enzyme catalyses IDP + H2O = IMP + phosphate + H(+). The catalysed reaction is dIDP + H2O = dIMP + phosphate + H(+). It carries out the reaction a 5'-end NAD(+)-phospho-ribonucleoside in mRNA + H2O = a 5'-end phospho-ribonucleoside in mRNA + NAD(+) + H(+). It catalyses the reaction a 5'-end FAD-phospho-ribonucleoside in mRNA + H2O = a 5'-end phospho-adenosine-phospho-ribonucleoside in mRNA + FMN + 2 H(+). The enzyme catalyses a 5'-end CoA-ribonucleoside in mRNA + H2O = a 5'-end phospho-adenosine-phospho-ribonucleoside in mRNA + (R)-4'-phosphopantetheine + 2 H(+). In terms of biological role, RNA-binding and decapping enzyme that catalyzes the cleavage of the cap structure of snoRNAs and mRNAs in a metal-dependent manner. Part of the U8 snoRNP complex that is required for the accumulation of mature 5.8S and 28S rRNA. Has diphosphatase activity and removes m7G and/or m227G caps from U8 snoRNA and leaves a 5'monophosphate on the RNA. Also catalyzes the cleavage of the cap structure on mRNAs. Does not hydrolyze cap analog structures like 7-methylguanosine nucleoside triphosphate (m7GpppG). Also hydrolysis m7G- and m227G U3-capped RNAs but with less efficiencies. Has broad substrate specificity with manganese or cobalt as cofactor and can act on various RNA species. Binds to the U8 snoRNA; metal is not required for RNA-binding. May play a role in the regulation of snoRNAs and mRNAs degradation. Also acts as a phosphatase; hydrolyzes the non-canonical purine nucleotides inosine diphosphate (IDP) and deoxyinosine diphosphate (dITP) as well as guanosine diphosphate (GDP), deoxyguanosine diphosphate (dGDP), xanthine diphosphate (XDP), inosine triphosphate (ITP) and deoxyinosine triphosphate (ITP) to their respective monophosphate derivatives and does not distinguish between the deoxy- and ribose forms. The order of activity with different substrates is IDP &gt; dIDP &gt;&gt; GDP = dGDP &gt; XDP = ITP = dITP. Binds strongly to GTP, ITP and XTP. Participates in the hydrolysis of dIDP/IDP and probably excludes non-canonical purines from RNA and DNA precursor pools, thus preventing their incorporation into RNA and DNA and avoiding chromosomal lesions. Exhibits decapping activity towards NAD-capped RNAs and FAD-capped RNAs. Exhibits decapping activity towards dpCoA-capped RNAs in vitro. In Mus musculus (Mouse), this protein is U8 snoRNA-decapping enzyme (Nudt16).